A 147-amino-acid polypeptide reads, in one-letter code: Hemoglobin subunit beta (147 aa).

The 145-residue stretch at 3–147 folds into the Globin domain; sequence LLSAEENAHV…VANALAHKYH (145 aa). A Phosphothreonine modification is found at T13. The residue at position 45 (S45) is a Phosphoserine. The residue at position 60 (K60) is an N6-acetyllysine. H64 contributes to the heme b binding site. K83 is modified (N6-acetyllysine). H93 lines the heme b pocket. At C94 the chain carries S-nitrosocysteine. Residue K145 is modified to N6-acetyllysine.

This sequence belongs to the globin family. In terms of assembly, heterotetramer of two alpha chains and two beta chains. As to expression, red blood cells.

Its function is as follows. Involved in oxygen transport from the lung to the various peripheral tissues. This Eulemur fulvus fulvus (Brown lemur) protein is Hemoglobin subunit beta (HBB).